Consider the following 940-residue polypeptide: MSDYKSTLNLPETEFPMRGNLANREPVMLKSWAEDDLYQQIRDSRIGRKPFILHDGPPYANGSIHIGHSVNKILKDIIVKSKTMSGFDAPYIPGWDCHGLPIELKVEQKVGKPGHKVTAAEFRVKCREYAAKQVDGQRDDFMRLGVFGDWHNPYLTMDYSTEANIVRSLSKVIDSGHLHKGVKPVHWCTECGSALAEAEVEYEDKKSPAIDVAFAAADKVTLLAKFGVEECSGSVSMVIWTTTPWTLPANRALSVAGDIEYALVEFVKGDKTSSVILAETLVESCMERYGVDSHNVLGKTSGQSLELLRFNHPFYDFDVPVILGEHVTVDSGTGVVHTAPGHGQDDFVVGQKYGLEVANPVGDNGVYKSDTEIFAGQHVFKANDNVVALLEEKGALIKLENILHSYPHCWRHKTPIIFRATPQWFISMEQKGLRKQALNEIEQTQWIPDWGQSRIEKMVENRPDWCISRQRTWGVPIALFVHRETEELHPDSSSLMERVANKIEQEGIQAWWDLDAAELLGEEADQYRKVTDTLDVWYDSGSSFSSVVASRPEFQGHDIDLYLEGSDQHRGWFMSSLMISTAMNGKAPYKQVLTHGFTVDGNGRKMSKSVGNVIAPQTVTNKLGADILRLWVAATDYSGEMTVSDEILKRSADAYRRIRNTARFLLANINGFNPETDLVAVEEMVALDRWAVRRAAALQEELLEAYEQYNFHVVTQKLMQFCSVELGSFYLDIIKDRQYTAKGDSHARRSCQSALYLISEAMVRWIAPILSFTADEVWQLLPGQRDKYVFTQEWFQGLKSVTLESDLSDDFWSELLTVRGEVNKVIEQARREKQVGGSLEAEITLYADDALSTALATLGDELRFVLLTSKTQILDLSAAPADAIETELSSLKLGLKKAETEKCERCWHHREDVGQVATHPTLCTRCVTNIEGDGEVRQFA.

The short motif at 58 to 68 (PYANGSIHIGH) is the 'HIGH' region element. L-isoleucyl-5'-AMP is bound at residue Glu-564. The short motif at 605-609 (KMSKS) is the 'KMSKS' region element. Lys-608 contacts ATP. Residues Cys-903, Cys-906, Cys-923, and Cys-926 each contribute to the Zn(2+) site.

This sequence belongs to the class-I aminoacyl-tRNA synthetase family. IleS type 1 subfamily. Monomer. It depends on Zn(2+) as a cofactor.

The protein localises to the cytoplasm. It catalyses the reaction tRNA(Ile) + L-isoleucine + ATP = L-isoleucyl-tRNA(Ile) + AMP + diphosphate. Functionally, catalyzes the attachment of isoleucine to tRNA(Ile). As IleRS can inadvertently accommodate and process structurally similar amino acids such as valine, to avoid such errors it has two additional distinct tRNA(Ile)-dependent editing activities. One activity is designated as 'pretransfer' editing and involves the hydrolysis of activated Val-AMP. The other activity is designated 'posttransfer' editing and involves deacylation of mischarged Val-tRNA(Ile). The chain is Isoleucine--tRNA ligase from Shewanella woodyi (strain ATCC 51908 / MS32).